Reading from the N-terminus, the 162-residue chain is Phosphopantetheine adenylyltransferase (162 aa).

Ser-11 is a binding site for substrate. Residues 11–12 (SF) and His-19 contribute to the ATP site. The substrate site is built by Lys-43, Val-76, and Arg-90. ATP-binding positions include 91-93 (GLR), Glu-101, and 126-132 (HLYISSS).

The protein belongs to the bacterial CoaD family. As to quaternary structure, homohexamer. Requires Mg(2+) as cofactor.

Its subcellular location is the cytoplasm. The enzyme catalyses (R)-4'-phosphopantetheine + ATP + H(+) = 3'-dephospho-CoA + diphosphate. Its pathway is cofactor biosynthesis; coenzyme A biosynthesis; CoA from (R)-pantothenate: step 4/5. Reversibly transfers an adenylyl group from ATP to 4'-phosphopantetheine, yielding dephospho-CoA (dPCoA) and pyrophosphate. In Streptococcus pneumoniae (strain JJA), this protein is Phosphopantetheine adenylyltransferase.